Here is a 394-residue protein sequence, read N- to C-terminus: Dual-specificity RNA methyltransferase RlmN (394 aa).

E116 (proton acceptor) is an active-site residue. Positions 122–365 constitute a Radical SAM core domain; that stretch reads EEDRGTLCVS…SPIRTPRGED (244 aa). The cysteines at positions 129 and 370 are disulfide-linked. Residues C136, C140, and C143 each contribute to the [4Fe-4S] cluster site. S-adenosyl-L-methionine-binding positions include 196-197, S228, 250-252, and N327; these read GE and SFH. The active-site S-methylcysteine intermediate is the C370.

This sequence belongs to the radical SAM superfamily. RlmN family. [4Fe-4S] cluster serves as cofactor.

It is found in the cytoplasm. It carries out the reaction adenosine(2503) in 23S rRNA + 2 reduced [2Fe-2S]-[ferredoxin] + 2 S-adenosyl-L-methionine = 2-methyladenosine(2503) in 23S rRNA + 5'-deoxyadenosine + L-methionine + 2 oxidized [2Fe-2S]-[ferredoxin] + S-adenosyl-L-homocysteine. The catalysed reaction is adenosine(37) in tRNA + 2 reduced [2Fe-2S]-[ferredoxin] + 2 S-adenosyl-L-methionine = 2-methyladenosine(37) in tRNA + 5'-deoxyadenosine + L-methionine + 2 oxidized [2Fe-2S]-[ferredoxin] + S-adenosyl-L-homocysteine. Specifically methylates position 2 of adenine 2503 in 23S rRNA and position 2 of adenine 37 in tRNAs. m2A2503 modification seems to play a crucial role in the proofreading step occurring at the peptidyl transferase center and thus would serve to optimize ribosomal fidelity. The chain is Dual-specificity RNA methyltransferase RlmN from Dinoroseobacter shibae (strain DSM 16493 / NCIMB 14021 / DFL 12).